The sequence spans 166 residues: Interferon gamma (166 aa).

A signal peptide spans 1-23 (MNYTSFILAFQLCAILGSSTYYC). A Pyrrolidone carboxylic acid modification is found at Gln-24. Residues Asn-39 and Asn-106 are each glycosylated (N-linked (GlcNAc...) asparagine). The disordered stretch occupies residues 147–166 (ANLRKRKRSQNPFRGRRALQ). Residues 148 to 166 (NLRKRKRSQNPFRGRRALQ) are compositionally biased toward basic residues.

The protein belongs to the type II (or gamma) interferon family. Homodimer. Interacts with IFNGR1 (via extracellular domain); this interaction promotes IFNGR1 dimerization. Released primarily from activated T lymphocytes.

It is found in the secreted. Functionally, type II interferon produced by immune cells such as T-cells and NK cells that plays crucial roles in antimicrobial, antiviral, and antitumor responses by activating effector immune cells and enhancing antigen presentation. Primarily signals through the JAK-STAT pathway after interaction with its receptor IFNGR1 to affect gene regulation. Upon IFNG binding, IFNGR1 intracellular domain opens out to allow association of downstream signaling components JAK2, JAK1 and STAT1, leading to STAT1 activation, nuclear translocation and transcription of IFNG-regulated genes. Many of the induced genes are transcription factors such as IRF1 that are able to further drive regulation of a next wave of transcription. Plays a role in class I antigen presentation pathway by inducing a replacement of catalytic proteasome subunits with immunoproteasome subunits. In turn, increases the quantity, quality, and repertoire of peptides for class I MHC loading. Increases the efficiency of peptide generation also by inducing the expression of activator PA28 that associates with the proteasome and alters its proteolytic cleavage preference. Up-regulates as well MHC II complexes on the cell surface by promoting expression of several key molecules such as cathepsins B/CTSB, H/CTSH, and L/CTSL. Participates in the regulation of hematopoietic stem cells during development and under homeostatic conditions by affecting their development, quiescence, and differentiation. This chain is Interferon gamma (IFNG), found in Equus asinus (Donkey).